We begin with the raw amino-acid sequence, 430 residues long: Adenylosuccinate synthetase (430 aa).

Residues 12–18 and 40–42 each bind GTP; these read GDEGKGK and GHT. Asp13 acts as the Proton acceptor in catalysis. 2 residues coordinate Mg(2+): Asp13 and Gly40. IMP contacts are provided by residues 13–16, 38–41, Thr130, Arg144, Gln224, Thr239, and Arg303; these read DEGK and NAGH. Catalysis depends on His41, which acts as the Proton donor. Residue 299–305 participates in substrate binding; it reads VVTGRKR. GTP is bound by residues Arg305, 331–333, and 413–415; these read KLD and STS.

Belongs to the adenylosuccinate synthetase family. As to quaternary structure, homodimer. Requires Mg(2+) as cofactor.

The protein localises to the cytoplasm. It catalyses the reaction IMP + L-aspartate + GTP = N(6)-(1,2-dicarboxyethyl)-AMP + GDP + phosphate + 2 H(+). The protein operates within purine metabolism; AMP biosynthesis via de novo pathway; AMP from IMP: step 1/2. Its function is as follows. Plays an important role in the de novo pathway of purine nucleotide biosynthesis. Catalyzes the first committed step in the biosynthesis of AMP from IMP. This Methylobacterium sp. (strain 4-46) protein is Adenylosuccinate synthetase.